The sequence spans 173 residues: DASH complex subunit SPC19 (173 aa).

This sequence belongs to the DASH complex SPC19 family. Component of the DASH complex consisting of ASK1, DAD1, DAD2, DAD3, DAD4, DAM1, DUO1, HSK3, SPC19 and SPC34, with a stoichiometry of one copy of each subunit per complex. Multiple DASH complexes oligomerize to form a ring that encircles spindle microtubules and organizes the rod-like NDC80 complexes of the outer kinetochore. DASH complex oligomerization strengthens microtubule attachments. On cytoplasmic microtubules, DASH complexes appear to form patches instead of rings.

It is found in the nucleus. The protein localises to the cytoplasm. Its subcellular location is the cytoskeleton. It localises to the spindle. The protein resides in the chromosome. It is found in the centromere. The protein localises to the kinetochore. Its function is as follows. Component of the DASH complex that connects microtubules with kinetochores and couples microtubule depolymerisation to chromosome movement; it is involved in retrieving kinetochores to the spindle poles before their re-orientation on the spindle in early mitosis and allows microtubule depolymerization to pull chromosomes apart and resist detachment during anaphase. Kinetochores, consisting of a centromere-associated inner segment and a microtubule-contacting outer segment, play a crucial role in chromosome segregation by mediating the physical connection between centromeric DNA and microtubules. Kinetochores also serve as an input point for the spindle assembly checkpoint, which delays anaphase until all chromosomes have bioriented on the mitotic spindle. This Chaetomium thermophilum (strain DSM 1495 / CBS 144.50 / IMI 039719) (Thermochaetoides thermophila) protein is DASH complex subunit SPC19.